The following is a 452-amino-acid chain: Gamma conglutin 1 (452 aa).

An N-terminal signal peptide occupies residues 1–33 (MAKNMAPILHILVISLSYSFLFVTSSSQNSQSL). In terms of domain architecture, Peptidase A1 spans 61 to 432 (HWGNILKRTP…DLARSRVGFN (372 aa)). 5 disulfide bridges follow: Cys89-Cys179, Cys103-Cys116, Cys108-Cys134, Cys119-Cys129, and Cys353-Cys394. Asn131 is a glycosylation site (N-linked (GlcNAc...) asparagine).

It belongs to the peptidase A1 family. Two-subunit monomeric unit made of alpha and beta subunits coupled by disulfide bonds (at pH 4.5 and under non-reducing conditions). Monomeric alpha and beta subunits in reducing conditions. Can also form oligomers including dimer, tetramer and cyclic hexamer (trimer of dimers) (at pH &gt; 5.5). Component of globulins complexes which accumulate in seeds. Interacts with flavonoids (e.g. apigenin glucosides) present in globulins complexes. In terms of processing, glycosylated on alpha chain at Asn-131; identified N-glycans bound are Man(2)(Xyl)(Fuc)GlcNAc(2), Man(3)(Xyl)(Fuc)GlcNAc(2), GlcNAcMan(3)(Xyl)(Fuc)GlcNAc(2) and GlcNAc(2)Man(3)(Xyl)(Fuc)GlcNAc(2). As to expression, expressed in developing seeds and in the young roots and cotyledons of germinating seeds and young seedlings.

The protein localises to the secreted. The protein resides in the extracellular space. In terms of biological role, sulfur-rich seed storage protein that remains undegraded at germination. The uncleaved form exhibits some inhibitory activity against GH11 xylanase from T.longibrachiatum, more at pH 7 than at pH 5.3, but not against GH12 xyloglucan-specific endoglucanase (XEG) from A.aculeatus. Binds to model phospholipid membranes containing dimyristoyl phosphatidylglycerol (DMPG), dioleoyl phosphatidic acid (DOPA) or mixture of dimyristoyl phosphatidylcholine and dimyristoyl phosphatidylglycerol (DMPC:DMPG), or mixture of dioleoyl phosphatidic acid and dioleoyl phosphatidylcholine (DOPC:DOPA). The chain is Gamma conglutin 1 from Lupinus albus (White lupine).